The following is a 165-amino-acid chain: Transcription elongation factor GreA (165 aa).

Positions 55 to 78 (AAKEEQGKQELRVRQLTQLLENAK) form a coiled coil.

Belongs to the GreA/GreB family.

In terms of biological role, necessary for efficient RNA polymerase transcription elongation past template-encoded arresting sites. The arresting sites in DNA have the property of trapping a certain fraction of elongating RNA polymerases that pass through, resulting in locked ternary complexes. Cleavage of the nascent transcript by cleavage factors such as GreA or GreB allows the resumption of elongation from the new 3'terminus. GreA releases sequences of 2 to 3 nucleotides. This chain is Transcription elongation factor GreA, found in Streptomyces avermitilis (strain ATCC 31267 / DSM 46492 / JCM 5070 / NBRC 14893 / NCIMB 12804 / NRRL 8165 / MA-4680).